The sequence spans 218 residues: Protein-methionine-sulfoxide reductase heme-binding subunit MsrQ (218 aa).

A run of 5 helical transmembrane segments spans residues 14 to 34 (LVHAAALAPIALLGWQFWQVW), 60 to 80 (FLLITLAITPLRQLTGQAVVI), 86 to 106 (LGLYAFFYASVHLAAYLTLDL), 121 to 141 (PYITVGFAAWLLLMPLAITST), and 155 to 175 (LHTLIYPIGLLAVLHFWWLVK).

It belongs to the MsrQ family. In terms of assembly, heterodimer of a catalytic subunit (MsrP) and a heme-binding subunit (MsrQ). FMN is required as a cofactor. It depends on heme b as a cofactor.

The protein resides in the cell inner membrane. Its function is as follows. Part of the MsrPQ system that repairs oxidized periplasmic proteins containing methionine sulfoxide residues (Met-O), using respiratory chain electrons. Thus protects these proteins from oxidative-stress damage caused by reactive species of oxygen and chlorine generated by the host defense mechanisms. MsrPQ is essential for the maintenance of envelope integrity under bleach stress, rescuing a wide series of structurally unrelated periplasmic proteins from methionine oxidation. MsrQ provides electrons for reduction to the reductase catalytic subunit MsrP, using the quinone pool of the respiratory chain. The protein is Protein-methionine-sulfoxide reductase heme-binding subunit MsrQ of Xanthomonas euvesicatoria pv. vesicatoria (strain 85-10) (Xanthomonas campestris pv. vesicatoria).